Here is a 231-residue protein sequence, read N- to C-terminus: Homeobox protein engrailed-1a (231 aa).

Disordered regions lie at residues M1–N29, G43–Q105, and D121–T148. The segment covering G43 to G56 has biased composition (basic and acidic residues). Residues D68 to K102 show a composition bias toward low complexity. Residues D143–S202 constitute a DNA-binding region (homeobox).

It belongs to the engrailed homeobox family.

The protein localises to the nucleus. This is Homeobox protein engrailed-1a (eng1a) from Danio rerio (Zebrafish).